We begin with the raw amino-acid sequence, 416 residues long: Trifolitoxin-processing protein TfxD (416 aa).

The next 11 membrane-spanning stretches (helical) occupy residues 24–44 (MIPNVADTIVVTLIGATALQV), 48–68 (VLITILTLNIAFLNFCSLICM), 79–99 (VFAAIVRAACMMIGVYLALIA), 114–134 (IAFIALSALRPFVAGWNAYCA), 153–173 (SSLIYAGVNLLFVGLSHFAGT), 176–196 (SIISLLIGVYLALFHNALAYA), 230–250 (ASFINMLEMGFLALVGWVVAA), 255–275 (IAVFYFPFFTLVELTSGLAIG), 295–315 (VLIAVYSTYSLLCFLIYVGLI), 322–342 (IFALPLSLAGLALLFLICDGL), and 372–392 (VILALAAVLGSVQALAIALVL).

It localises to the cell membrane. Its function is as follows. The actions of the proteins TfxB, TfxD and TfxF are implicated in the processing of the inactive trifolitoxin (TfxA) precursor into the active peptide. The sequence is that of Trifolitoxin-processing protein TfxD (tfxD) from Rhizobium leguminosarum bv. trifolii.